The sequence spans 244 residues: Claudin-12 (244 aa).

Residues 1–10 (MGCRDVHAAT) are Cytoplasmic-facing. Residues 11–31 (VLSFLCGIASVAGLFAGTLLP) traverse the membrane as a helical segment. The Extracellular segment spans residues 32-87 (NWRKLRLITFNRNEKNLTIYTGLWVKCARYDGSSDCLMYDRTWYLSVDQLDLRVLQ). Residues 88–108 (FALPLSIVIAMGALLLCLIGM) form a helical membrane-spanning segment. At 109 to 135 (CNTAFNSSVPNIKLAKCLVNSAGCHLV) the chain is on the cytoplasmic side. Residues 136–156 (AGLLFFLAGTVSLSPSIWAIF) form a helical membrane-spanning segment. Over 157–174 (YNSHLNRKFEPVFTFDYA) the chain is Extracellular. Residues 175 to 195 (VFVTIASSGGLFMTALLLFVW) form a helical membrane-spanning segment. Over 196–244 (YCACKSLSSPFWQPLYSHAPGMHTYSQPYSSRSRLSAIEIDIPVVSHST) the chain is Cytoplasmic. Residues Ser228 and Ser231 each carry the phosphoserine modification.

It belongs to the claudin family. Interacts with OCLN.

Its subcellular location is the cell junction. It localises to the tight junction. The protein resides in the cell membrane. Its function is as follows. Plays a major role in tight junction-specific obliteration of the intercellular space, through calcium-independent cell-adhesion activity. The protein is Claudin-12 (Cldn12) of Mus musculus (Mouse).